The sequence spans 292 residues: Hypersensitive-induced response protein 4 (292 aa).

Gly2 is lipidated: N-myristoyl glycine.

In terms of assembly, self-interacts and forms heteromers. Interacts with NB-LRR class of R proteins before R proteins (e.g. RPS2 or RPM1) are activated by the effectors.

The protein resides in the cell membrane. In Arabidopsis thaliana (Mouse-ear cress), this protein is Hypersensitive-induced response protein 4 (HIR4).